A 456-amino-acid chain; its full sequence is MASFPPSLVFTVRRKEPTLVLPSKPTPRELKQLSDIDDQEGLRFQVPVIMFYKRKLSMEGEDPVKVIREALAEALAFYYPFAGRLIEGPNRKLMVDCTSEGVLFIEADADIELNQLIGDTIDPGTYLDELLHDVPGSEGILGCPLLLIQVTRFRCGGWAFAIRLNHTMSDTLGLVQFLTTIAEFTRGAEGAPSVPPVWQREFLAARQPPFIPFHHHEYEQVIDTTPDDNKKSMTHKSFFFGPKEIRAIRSHLPLHHRSTSSTFDVLTACLWRCRTCALVLDPKKTVRISCAASGRGKHDLHVPRGYYGNVSAFPATVLRAGMISTSPLEYAMEGVKKAKAKMTGEYLRSVADLMVTKGRPLYTVVGNYIVSDMTRVGLDTIDFGWGKPVYGGPARAFPLISFYGRFKDNKGEDGIVVLICLPEAAMETFQEELKKMIGEHVDGPFDYNPIKVVSKL.

Catalysis depends on proton acceptor residues His-166 and Asp-382.

This sequence belongs to the plant acyltransferase family.

Its function is as follows. Involved in the biosynthesis of volatile esters which confer kiwifruit flavor. Alcohol acyl transferase that can use a wide range of alcohols as substrate to produce esters. This is Alcohol acyltransferase 1 from Actinidia chinensis var. chinensis (Chinese soft-hair kiwi).